The primary structure comprises 341 residues: tRNA N6-adenosine threonylcarbamoyltransferase (341 aa).

The Fe cation site is built by His-111 and His-115. Substrate contacts are provided by residues 134-138 (LVSGG), Asp-167, Gly-180, and Asn-276. Asp-304 lines the Fe cation pocket.

Belongs to the KAE1 / TsaD family. Fe(2+) is required as a cofactor.

Its subcellular location is the cytoplasm. The catalysed reaction is L-threonylcarbamoyladenylate + adenosine(37) in tRNA = N(6)-L-threonylcarbamoyladenosine(37) in tRNA + AMP + H(+). Functionally, required for the formation of a threonylcarbamoyl group on adenosine at position 37 (t(6)A37) in tRNAs that read codons beginning with adenine. Is involved in the transfer of the threonylcarbamoyl moiety of threonylcarbamoyl-AMP (TC-AMP) to the N6 group of A37, together with TsaE and TsaB. TsaD likely plays a direct catalytic role in this reaction. This is tRNA N6-adenosine threonylcarbamoyltransferase from Alteromonas mediterranea (strain DSM 17117 / CIP 110805 / LMG 28347 / Deep ecotype).